The chain runs to 445 residues: MTSVGIDAMEIWTGKLVLDLPNTFAPVKGEDPEKYTKGLGLHTSSFPDVYEDIVTMGANAAKKLMDRKGLTPADIGRIDVATESAFDNSKPVSTYIAGCLEQVYDGDFRHANKGERKFACIAGTQSLDDAYNWIKAGRNRGRAALVIATDTALYERGDPGEATQGAGAVAMLIDEDPDLVELSTEQGYGSMDETDFLKPNQQFPSVDGKRSMQVYLARMREALEDYESVAGRTHPDLFEYIPFHTPFPGMVRKAALLGFRHMTRDTDIEDDLESEIGRQPREEDFETWDDYEEAIRGYMDELKTTEQYRDWYGRVIEPTLDISSRVGNWYTGSVHIARLSALKAAADEGKDMTGKQLLVGSYGSGAQAEIHAERVQETWLDEIEAVDVDDQLAARTEISFDDYELIHDVHNHEKEIEVEEFTQPEAEFVFTGWGRMNERRYEYVE.

Position 31 (Asp31) interacts with (3S)-3-hydroxy-3-methylglutaryl-CoA. Glu83 acts as the Proton donor/acceptor in catalysis. 7 residues coordinate (3S)-3-hydroxy-3-methylglutaryl-CoA: Cys120, Thr163, Ser211, His244, Lys253, Asn328, and Ser364. Cys120 serves as the catalytic Acyl-thioester intermediate. The active-site Proton donor/acceptor is the His244.

Belongs to the thiolase-like superfamily. HMG-CoA synthase family.

It catalyses the reaction acetoacetyl-CoA + acetyl-CoA + H2O = (3S)-3-hydroxy-3-methylglutaryl-CoA + CoA + H(+). The protein operates within metabolic intermediate biosynthesis; (R)-mevalonate biosynthesis; (R)-mevalonate from acetyl-CoA: step 2/3. Its activity is regulated as follows. In contrast to bacterial and eukaryotic HMG-CoA synthases, is insensitive to feedback substrate inhibition by acetoacetyl-CoA. Enzymatic activity is inhibited by hymeglusin, which also blocks the propagation of H.volcanii cells in vivo, indicating the critical role that the mevalonate pathway plays in isoprenoid biosynthesis by these archaea. Its function is as follows. Catalyzes the condensation of acetyl-CoA with acetoacetyl-CoA to form 3-hydroxy-3-methylglutaryl-CoA (HMG-CoA). Functions in the mevalonate (MVA) pathway leading to isopentenyl diphosphate (IPP), a key precursor for the biosynthesis of isoprenoid compounds such as archaeal membrane lipids. The chain is Hydroxymethylglutaryl-CoA synthase (hmgB) from Haloferax volcanii (strain ATCC 29605 / DSM 3757 / JCM 8879 / NBRC 14742 / NCIMB 2012 / VKM B-1768 / DS2) (Halobacterium volcanii).